The chain runs to 126 residues: Large ribosomal subunit protein bL12 (126 aa).

It belongs to the bacterial ribosomal protein bL12 family. As to quaternary structure, homodimer. Part of the ribosomal stalk of the 50S ribosomal subunit. Forms a multimeric L10(L12)X complex, where L10 forms an elongated spine to which 2 to 4 L12 dimers bind in a sequential fashion. Binds GTP-bound translation factors.

In terms of biological role, forms part of the ribosomal stalk which helps the ribosome interact with GTP-bound translation factors. Is thus essential for accurate translation. This is Large ribosomal subunit protein bL12 from Methylocella silvestris (strain DSM 15510 / CIP 108128 / LMG 27833 / NCIMB 13906 / BL2).